The following is a 349-amino-acid chain: Phosphoribosylformylglycinamidine cyclo-ligase (349 aa).

This sequence belongs to the AIR synthase family.

It is found in the cytoplasm. It catalyses the reaction 2-formamido-N(1)-(5-O-phospho-beta-D-ribosyl)acetamidine + ATP = 5-amino-1-(5-phospho-beta-D-ribosyl)imidazole + ADP + phosphate + H(+). Its pathway is purine metabolism; IMP biosynthesis via de novo pathway; 5-amino-1-(5-phospho-D-ribosyl)imidazole from N(2)-formyl-N(1)-(5-phospho-D-ribosyl)glycinamide: step 2/2. This chain is Phosphoribosylformylglycinamidine cyclo-ligase, found in Listeria monocytogenes serotype 4a (strain HCC23).